A 157-amino-acid polypeptide reads, in one-letter code: 3-dehydroquinate dehydratase (157 aa).

Tyrosine 22 functions as the Proton acceptor in the catalytic mechanism. Residues asparagine 73, histidine 79, and aspartate 86 each coordinate substrate. Catalysis depends on histidine 99, which acts as the Proton donor. Residues 100-101 and arginine 110 each bind substrate; that span reads LS.

It belongs to the type-II 3-dehydroquinase family. In terms of assembly, homododecamer.

It carries out the reaction 3-dehydroquinate = 3-dehydroshikimate + H2O. Its pathway is metabolic intermediate biosynthesis; chorismate biosynthesis; chorismate from D-erythrose 4-phosphate and phosphoenolpyruvate: step 3/7. Catalyzes a trans-dehydration via an enolate intermediate. The polypeptide is 3-dehydroquinate dehydratase (Roseiflexus castenholzii (strain DSM 13941 / HLO8)).